The following is a 247-amino-acid chain: 2,3-bisphosphoglycerate-dependent phosphoglycerate mutase (247 aa).

Substrate contacts are provided by residues 8-15, 21-22, R60, 87-90, K98, 114-115, and 183-184; these read RHGESTWN, TG, ERHY, RR, and GN. H9 functions as the Tele-phosphohistidine intermediate in the catalytic mechanism. Catalysis depends on E87, which acts as the Proton donor/acceptor.

It belongs to the phosphoglycerate mutase family. BPG-dependent PGAM subfamily. In terms of assembly, homodimer.

It carries out the reaction (2R)-2-phosphoglycerate = (2R)-3-phosphoglycerate. It participates in carbohydrate degradation; glycolysis; pyruvate from D-glyceraldehyde 3-phosphate: step 3/5. Its function is as follows. Catalyzes the interconversion of 2-phosphoglycerate and 3-phosphoglycerate. This chain is 2,3-bisphosphoglycerate-dependent phosphoglycerate mutase, found in Leptothrix cholodnii (strain ATCC 51168 / LMG 8142 / SP-6) (Leptothrix discophora (strain SP-6)).